The sequence spans 126 residues: MTVLLEHPLGPDSSRILCLALGKNMASKASCTSLSFLLCMATCSKQLGLNFSYHCSPPSSLILGRILDVSCLERKSFSVLLALRTGEVGLDELHFVICEPNELRLYCNKGRLFKFVLSISFRQEQT.

This is an uncharacterized protein from Saccharomyces cerevisiae (strain ATCC 204508 / S288c) (Baker's yeast).